The sequence spans 655 residues: Integrin beta-5 (655 aa).

One can recognise a VWFA domain in the interval D1–I234. The Extracellular segment spans residues D1–N575. The Mg(2+) site is built by S3 and S5. Ca(2+) contacts are provided by S5, D8, D9, and D40. C58 and C67 are oxidised to a cystine. Positions 98, 100, 102, and 103 each coordinate Ca(2+). E103 is a Mg(2+) binding site. A disulfide bridge links C115 with C156. An N-linked (GlcNAc...) asparagine glycan is attached at N203. G218 contacts Ca(2+). Disulfide bonds link C257-C269, C289-C317, C321-C340, C332-C343, C345-C354, C356-C386, C369-C384, C378-C389, C391-C404, C406-C427, C411-C425, C419-C430, and C432-C441. N316 carries an N-linked (GlcNAc...) asparagine glycan. 4 I-EGF domains span residues C321 to E355, C356 to E405, C406 to N442, and C443 to E482. N408 is a glycosylation site (N-linked (GlcNAc...) asparagine). N-linked (GlcNAc...) asparagine glycosylation is present at N442. Disulfide bonds link C443–C466, C450–C464, C458–C469, C471–C481, C484–C487, C491–C538, C497–C517, C500–C513, and C546–C570. N510 and N561 each carry an N-linked (GlcNAc...) asparagine glycan. Residues A576–W598 traverse the membrane as a helical segment. Over K599 to D655 the chain is Cytoplasmic. Phosphoserine is present on S626.

It belongs to the integrin beta chain family. Heterodimer of an alpha and a beta subunit. Beta-5 (ITGB5) associates with alpha-V (ITGAV). Interacts with MYO10. Interacts with DAB2. Integrin ITGAV:ITGB5 interacts with FBLN5 (via N-terminus). ITGAV:ITGB5 interacts with CCN3. Interacts with tensin TNS3; TNS3 also interacts with PEAK1, thus acting as an adapter molecule to bridge the association of PEAK1 with ITGB5.

Its subcellular location is the cell membrane. Its function is as follows. Integrin alpha-V/beta-5 (ITGAV:ITGB5) is a receptor for fibronectin. It recognizes the sequence R-G-D in its ligand. This Papio cynocephalus (Yellow baboon) protein is Integrin beta-5 (ITGB5).